Reading from the N-terminus, the 732-residue chain is Catalase-peroxidase (732 aa).

A disordered region spans residues 1 to 24 (MDAKTDDNSAGKCPVAHGSAGRTN). Residues 96-219 (WHSAGTYRIA…LGAVQMGLIY (124 aa)) constitute a cross-link (tryptophyl-tyrosyl-methioninium (Trp-Tyr) (with M-245)). The active-site Proton acceptor is the H97. A cross-link (tryptophyl-tyrosyl-methioninium (Tyr-Met) (with W-96)) is located at residues 219 to 245 (YVNPEGPNGNPDPLAAARDIRDTFARM). H260 lines the heme b pocket.

It belongs to the peroxidase family. Peroxidase/catalase subfamily. In terms of assembly, homodimer or homotetramer. Requires heme b as cofactor. Formation of the three residue Trp-Tyr-Met cross-link is important for the catalase, but not the peroxidase activity of the enzyme.

The catalysed reaction is H2O2 + AH2 = A + 2 H2O. The enzyme catalyses 2 H2O2 = O2 + 2 H2O. Bifunctional enzyme with both catalase and broad-spectrum peroxidase activity. The polypeptide is Catalase-peroxidase (Mesorhizobium japonicum (strain LMG 29417 / CECT 9101 / MAFF 303099) (Mesorhizobium loti (strain MAFF 303099))).